A 139-amino-acid polypeptide reads, in one-letter code: Large ribosomal subunit protein uL16c (139 aa).

Residues 1-17 (MLSPKKTKFRKQHRGRM) show a composition bias toward basic residues. Residues 1–23 (MLSPKKTKFRKQHRGRMKGSASK) are disordered.

Belongs to the universal ribosomal protein uL16 family. As to quaternary structure, part of the 50S ribosomal subunit.

It is found in the plastid. It localises to the chloroplast. This Porphyra purpurea (Red seaweed) protein is Large ribosomal subunit protein uL16c.